The following is a 375-amino-acid chain: Digeranylgeranylglycerophospholipid reductase 1 (375 aa).

Residues A13, E32, C43, A44, G46, R92, A116, D275, G287, and L288 each coordinate FAD. G367 provides a ligand contact to a 2,3-bis-O-(geranylgeranyl)-sn-glycerol 1-phospholipid.

It belongs to the geranylgeranyl reductase family. DGGGPL reductase subfamily. Requires FAD as cofactor.

The catalysed reaction is a 2,3-bis-O-phytanyl-sn-glycerol 1-phospholipid + 8 A = a 2,3-bis-O-(geranylgeranyl)-sn-glycerol 1-phospholipid + 8 AH2. The enzyme catalyses 2,3-bis-O-(phytanyl)-sn-glycerol 1-phosphate + 8 A = 2,3-bis-O-(geranylgeranyl)-sn-glycerol 1-phosphate + 8 AH2. It catalyses the reaction CDP-2,3-bis-O-(geranylgeranyl)-sn-glycerol + 8 AH2 = CDP-2,3-bis-O-(phytanyl)-sn-glycerol + 8 A. It carries out the reaction archaetidylserine + 8 AH2 = 2,3-bis-O-phytanyl-sn-glycero-3-phospho-L-serine + 8 A. The protein operates within membrane lipid metabolism; glycerophospholipid metabolism. Is involved in the reduction of 2,3-digeranylgeranylglycerophospholipids (unsaturated archaeols) into 2,3-diphytanylglycerophospholipids (saturated archaeols) in the biosynthesis of archaeal membrane lipids. Catalyzes the formation of archaetidic acid (2,3-di-O-phytanyl-sn-glyceryl phosphate) from 2,3-di-O-geranylgeranylglyceryl phosphate (DGGGP) via the hydrogenation of each double bond of the isoprenoid chains. Is also probably able to reduce double bonds of geranyl groups in CDP-2,3-bis-O-(geranylgeranyl)-sn-glycerol and archaetidylserine, thus acting at various stages in the biosynthesis of archaeal membrane lipids. The polypeptide is Digeranylgeranylglycerophospholipid reductase 1 (Methanopyrus kandleri (strain AV19 / DSM 6324 / JCM 9639 / NBRC 100938)).